Reading from the N-terminus, the 60-residue chain is Defensin MGD-1 (60 aa).

4 disulfide bridges follow: cysteine 4-cysteine 25, cysteine 10-cysteine 33, cysteine 14-cysteine 35, and cysteine 21-cysteine 38. Position 28 is a 3-hydroxytryptophan (tryptophan 28). Cysteine 38 carries the post-translational modification Cysteine amide. The propeptide occupies 39-60; it reads GGRREDVEDIFDIFDNEAADRF.

This sequence belongs to the invertebrate defensin family. Type 2 subfamily. Post-translationally, the hydroxylation of the Trp-28 is not important for the antibacterial activity. In terms of tissue distribution, abundantly expressed in hemocytes.

It localises to the secreted. In terms of biological role, active against both Gram-positive and Gram-negative bacteria but is not cytotoxic towards human erythrocytes or protozoa. In Mytilus galloprovincialis (Mediterranean mussel), this protein is Defensin MGD-1 (FH3).